A 335-amino-acid chain; its full sequence is Ketol-acid reductoisomerase (NADP(+)) (335 aa).

In terms of domain architecture, KARI N-terminal Rossmann spans 5–185 (SKIYTDNDAN…GATRAGVIPT (181 aa)). Residues 28 to 31 (YGSQ), Ser-56, and 86 to 89 (DMVQ) each bind NADP(+). His-111 is a catalytic residue. Position 137 (Gly-137) interacts with NADP(+). Positions 186–331 (TFKEETETDL…NQLRDLVQKG (146 aa)) constitute a KARI C-terminal knotted domain. The Mg(2+) site is built by Asp-194, Glu-198, Glu-230, and Glu-234. Ser-255 lines the substrate pocket.

The protein belongs to the ketol-acid reductoisomerase family. Requires Mg(2+) as cofactor.

The enzyme catalyses (2R)-2,3-dihydroxy-3-methylbutanoate + NADP(+) = (2S)-2-acetolactate + NADPH + H(+). It carries out the reaction (2R,3R)-2,3-dihydroxy-3-methylpentanoate + NADP(+) = (S)-2-ethyl-2-hydroxy-3-oxobutanoate + NADPH + H(+). It functions in the pathway amino-acid biosynthesis; L-isoleucine biosynthesis; L-isoleucine from 2-oxobutanoate: step 2/4. Its pathway is amino-acid biosynthesis; L-valine biosynthesis; L-valine from pyruvate: step 2/4. Functionally, involved in the biosynthesis of branched-chain amino acids (BCAA). Catalyzes an alkyl-migration followed by a ketol-acid reduction of (S)-2-acetolactate (S2AL) to yield (R)-2,3-dihydroxy-isovalerate. In the isomerase reaction, S2AL is rearranged via a Mg-dependent methyl migration to produce 3-hydroxy-3-methyl-2-ketobutyrate (HMKB). In the reductase reaction, this 2-ketoacid undergoes a metal-dependent reduction by NADPH to yield (R)-2,3-dihydroxy-isovalerate. This chain is Ketol-acid reductoisomerase (NADP(+)), found in Saccharolobus solfataricus (strain ATCC 35092 / DSM 1617 / JCM 11322 / P2) (Sulfolobus solfataricus).